Here is a 533-residue protein sequence, read N- to C-terminus: Drimenyl diphosphate synthase (533 aa).

Residues arginine 132, lysine 133, glutamine 163, and tryptophan 165 each coordinate (2E,6E)-farnesyl diphosphate. Glutamate 169 is a binding site for Mg(2+). PFTB repeat units lie at residues valine 274–alanine 316, valine 324–proline 366, valine 372–glycine 415, alanine 425–proline 466, and leucine 474–leucine 517. Aspartate 303 (proton donor) is an active-site residue. Arginine 501 provides a ligand contact to (2E,6E)-farnesyl diphosphate.

It belongs to the terpene cyclase/mutase family. Requires Mg(2+) as cofactor. Ni(2+) serves as cofactor. The cofactor is Co(2+).

It catalyses the reaction (2E,6E)-farnesyl diphosphate = (5S,9S,10S)-drim-7-en-11-yl diphosphate. Its function is as follows. Catalyzes the cyclization of farnesyl diphosphate (FPP) to drimenyl diphosphate. Cannot use geranylgeranyl diphosphate (GGPP) as substrate. The protein is Drimenyl diphosphate synthase of Streptomyces showdoensis.